Reading from the N-terminus, the 139-residue chain is Large-conductance mechanosensitive channel (139 aa).

Helical transmembrane passes span 9–29 (AFAV…GAAF) and 79–99 (IQTV…VKAI).

This sequence belongs to the MscL family. Homopentamer.

The protein resides in the cell inner membrane. Functionally, channel that opens in response to stretch forces in the membrane lipid bilayer. May participate in the regulation of osmotic pressure changes within the cell. This is Large-conductance mechanosensitive channel from Pseudomonas putida (strain GB-1).